Here is a 450-residue protein sequence, read N- to C-terminus: UDP-N-acetylmuramoylalanine--D-glutamate ligase (450 aa).

119–125 (GSNGKTT) lines the ATP pocket.

It belongs to the MurCDEF family.

It is found in the cytoplasm. The enzyme catalyses UDP-N-acetyl-alpha-D-muramoyl-L-alanine + D-glutamate + ATP = UDP-N-acetyl-alpha-D-muramoyl-L-alanyl-D-glutamate + ADP + phosphate + H(+). It participates in cell wall biogenesis; peptidoglycan biosynthesis. Functionally, cell wall formation. Catalyzes the addition of glutamate to the nucleotide precursor UDP-N-acetylmuramoyl-L-alanine (UMA). This Streptococcus pneumoniae (strain ATCC 700669 / Spain 23F-1) protein is UDP-N-acetylmuramoylalanine--D-glutamate ligase.